Consider the following 302-residue polypeptide: Bifunctional protein FolD (302 aa).

NADP(+)-binding positions include 165 to 167 (GRS), serine 190, and isoleucine 231.

It belongs to the tetrahydrofolate dehydrogenase/cyclohydrolase family. As to quaternary structure, homodimer.

It catalyses the reaction (6R)-5,10-methylene-5,6,7,8-tetrahydrofolate + NADP(+) = (6R)-5,10-methenyltetrahydrofolate + NADPH. The catalysed reaction is (6R)-5,10-methenyltetrahydrofolate + H2O = (6R)-10-formyltetrahydrofolate + H(+). It functions in the pathway one-carbon metabolism; tetrahydrofolate interconversion. Functionally, catalyzes the oxidation of 5,10-methylenetetrahydrofolate to 5,10-methenyltetrahydrofolate and then the hydrolysis of 5,10-methenyltetrahydrofolate to 10-formyltetrahydrofolate. The chain is Bifunctional protein FolD from Prochlorococcus marinus (strain MIT 9211).